The sequence spans 163 residues: Peptide methionine sulfoxide reductase MsrA (163 aa).

The active site involves Cys-10.

It belongs to the MsrA Met sulfoxide reductase family.

The catalysed reaction is L-methionyl-[protein] + [thioredoxin]-disulfide + H2O = L-methionyl-(S)-S-oxide-[protein] + [thioredoxin]-dithiol. The enzyme catalyses [thioredoxin]-disulfide + L-methionine + H2O = L-methionine (S)-S-oxide + [thioredoxin]-dithiol. Functionally, has an important function as a repair enzyme for proteins that have been inactivated by oxidation. Catalyzes the reversible oxidation-reduction of methionine sulfoxide in proteins to methionine. The protein is Peptide methionine sulfoxide reductase MsrA of Vesicomyosocius okutanii subsp. Calyptogena okutanii (strain HA).